Here is a 239-residue protein sequence, read N- to C-terminus: Gamma-lactamase MBL2 (239 aa).

Residues histidine 56, histidine 58, aspartate 60, histidine 61, histidine 141, and aspartate 165 each contribute to the Zn(2+) site.

The protein belongs to the metallo-beta-lactamase superfamily.

In terms of biological role, gamma-lactamase; part of the Fusarium detoxification of benzoxazolinone cluster 2 (FDB2) involved in the degradation of benzoxazolinones produced by the host plant. Maize, wheat, and rye produce the 2 benzoxazinone phytoanticipins 2,4-dihy-droxy-7-methoxy-1,4-benzoxazin-3-one (DIMBOA) and 2,4-dihydroxy-1,4-benzoxazin-3-one (DIBOA) that, due to their inherent instability once released, spontaneously degrade to the more stable corresponding benzoxazolinones, 6-methoxy-2-benzoxazolinone (MBOA) and 2-benzoxazolinone (BOA), respectively. The first step in the detoxification of benzoxazolinones involves the hydrolysis of the cyclic ester bond of benzoxazolinones by the FDB1 cluster gamma-lactamase MBL1 to aminophenols. MBL1 is able to convert BOA into 2-aminophenol (2-AP), as well as MBOA into 5-methoxy-2-aminophenol (2-AMP). The FDB2 cluster N-malonyltransferase FDB2/NAT1 then metabolizes aminophenols via N-malonylation to non-toxic malonamic acids. FDB2/NAT1 converts 2-AP into N-(2-hydroxyphenyl) malonamic acid (HPMA) and 2-AMP into N-(2-hydroxy-4-methoxyphenyl) malonamic acid (HMPMA). The duplicated dienlactone hydrolases DLH1 and DLH2 may provide redundant function for hydrolyzing the lactone moiety in the BOA molecule. The roles of the amidases and other enzymes encoded by the 2 FDB clusters have not been identified so far. This is Gamma-lactamase MBL2 from Gibberella moniliformis (strain M3125 / FGSC 7600) (Maize ear and stalk rot fungus).